The sequence spans 384 residues: FAD-dependent urate hydroxylase (384 aa).

FAD-binding positions include Gly11, Glu30–Ala31, Ser43, and Val125. Substrate contacts are provided by residues Asn178, Arg204, and Tyr216–Phe218. FAD-binding positions include Asp285 and Gly295 to Cys299.

This sequence belongs to the FAD-dependent urate hydroxylase family. In terms of assembly, monomer. It depends on FAD as a cofactor.

It carries out the reaction urate + NADH + O2 + H(+) = 5-hydroxyisourate + NAD(+) + H2O. It participates in purine metabolism; urate degradation. Functionally, catalyzes the hydroxylation of urate to 5-hydroxyisourate (HIU). The chain is FAD-dependent urate hydroxylase from Klebsiella pneumoniae subsp. pneumoniae (strain ATCC 700721 / MGH 78578).